A 283-amino-acid polypeptide reads, in one-letter code: Arylamine N-acetyltransferase (283 aa).

The active-site Acyl-thioester intermediate is the Cys70. Catalysis depends on residues His110 and Asp127.

Belongs to the arylamine N-acetyltransferase family. Homodimer and homotetramer.

It catalyses the reaction an arylamine + acetyl-CoA = an N-acetylarylamine + CoA. Its function is as follows. Catalyzes the transfer of the acetyl group from acetyl coenzyme A to the free amino group of arylamines and hydrazines. Is able to utilize not only acetyl-CoA, but also n-propionyl-CoA and acetoacetyl-CoA as acyl donors, although at a lower rate. As acetyl-CoA and propionyl-CoA are products of cholesterol catabolism and the nat gene is likely present in the same operon than genes involved in cholesterol degradation, this enzyme could have a role in the utilization and regulation of these CoA species. This is Arylamine N-acetyltransferase (nat) from Mycobacterium bovis (strain ATCC BAA-935 / AF2122/97).